The chain runs to 132 residues: Small ribosomal subunit protein uS8c (132 aa).

It belongs to the universal ribosomal protein uS8 family. In terms of assembly, part of the 30S ribosomal subunit.

The protein localises to the plastid. The protein resides in the chloroplast. In terms of biological role, one of the primary rRNA binding proteins, it binds directly to 16S rRNA central domain where it helps coordinate assembly of the platform of the 30S subunit. This Ceratophyllum demersum (Rigid hornwort) protein is Small ribosomal subunit protein uS8c (rps8).